Here is a 95-residue protein sequence, read N- to C-terminus: Protein TusB (95 aa).

The protein belongs to the DsrH/TusB family. In terms of assembly, heterohexamer, formed by a dimer of trimers. The hexameric TusBCD complex contains 2 copies each of TusB, TusC and TusD. The TusBCD complex interacts with TusE.

The protein resides in the cytoplasm. In terms of biological role, part of a sulfur-relay system required for 2-thiolation of 5-methylaminomethyl-2-thiouridine (mnm(5)s(2)U) at tRNA wobble positions. The protein is Protein TusB of Enterobacter sp. (strain 638).